A 345-amino-acid chain; its full sequence is tRNA-dihydrouridine(20/20a) synthase (345 aa).

FMN is bound by residues 32–34 (PML) and glutamine 84. The active-site Proton donor is the cysteine 114. FMN is bound by residues lysine 153, histidine 186, 226-228 (NGG), and 248-249 (GR).

The protein belongs to the Dus family. DusA subfamily. FMN serves as cofactor.

The catalysed reaction is 5,6-dihydrouridine(20) in tRNA + NADP(+) = uridine(20) in tRNA + NADPH + H(+). The enzyme catalyses 5,6-dihydrouridine(20) in tRNA + NAD(+) = uridine(20) in tRNA + NADH + H(+). It carries out the reaction 5,6-dihydrouridine(20a) in tRNA + NADP(+) = uridine(20a) in tRNA + NADPH + H(+). It catalyses the reaction 5,6-dihydrouridine(20a) in tRNA + NAD(+) = uridine(20a) in tRNA + NADH + H(+). In terms of biological role, catalyzes the synthesis of 5,6-dihydrouridine (D), a modified base found in the D-loop of most tRNAs, via the reduction of the C5-C6 double bond in target uridines. Specifically modifies U20 and U20a in tRNAs. In Escherichia coli O157:H7, this protein is tRNA-dihydrouridine(20/20a) synthase.